The chain runs to 435 residues: Gamma-glutamyl phosphate reductase (435 aa).

The protein belongs to the gamma-glutamyl phosphate reductase family.

It is found in the cytoplasm. The catalysed reaction is L-glutamate 5-semialdehyde + phosphate + NADP(+) = L-glutamyl 5-phosphate + NADPH + H(+). Its pathway is amino-acid biosynthesis; L-proline biosynthesis; L-glutamate 5-semialdehyde from L-glutamate: step 2/2. Its function is as follows. Catalyzes the NADPH-dependent reduction of L-glutamate 5-phosphate into L-glutamate 5-semialdehyde and phosphate. The product spontaneously undergoes cyclization to form 1-pyrroline-5-carboxylate. The protein is Gamma-glutamyl phosphate reductase of Xylella fastidiosa (strain M12).